A 215-amino-acid polypeptide reads, in one-letter code: Orotate phosphoribosyltransferase (215 aa).

Lys26 is a 5-phospho-alpha-D-ribose 1-diphosphate binding site. Orotate is bound at residue Phe34–Phe35. Residues Tyr72 to Lys73, Arg99, Lys100, Lys103, His105, and Asp124 to Ala132 each bind 5-phospho-alpha-D-ribose 1-diphosphate. The orotate site is built by Thr128 and Arg156.

The protein belongs to the purine/pyrimidine phosphoribosyltransferase family. PyrE subfamily. As to quaternary structure, homodimer. Mg(2+) is required as a cofactor.

It catalyses the reaction orotidine 5'-phosphate + diphosphate = orotate + 5-phospho-alpha-D-ribose 1-diphosphate. It participates in pyrimidine metabolism; UMP biosynthesis via de novo pathway; UMP from orotate: step 1/2. Functionally, catalyzes the transfer of a ribosyl phosphate group from 5-phosphoribose 1-diphosphate to orotate, leading to the formation of orotidine monophosphate (OMP). The sequence is that of Orotate phosphoribosyltransferase from Yersinia pseudotuberculosis serotype O:1b (strain IP 31758).